The sequence spans 181 residues: Probable N-acetyltransferase YjcK (181 aa).

The N-acetyltransferase domain occupies 7 to 172; sequence IYVRPLEVTD…NGVWEDHQVL (166 aa).

This sequence belongs to the acetyltransferase family. RimJ subfamily.

The catalysed reaction is an N-terminal L-alpha-aminoacyl-[protein] + acetyl-CoA = N-terminal N(alpha)-acetyl-L-alpha-aminoacyl-[protein] + CoA + H(+). Functionally, probable N-terminal protein acetyltransferase. The chain is Probable N-acetyltransferase YjcK (yjcK) from Bacillus subtilis (strain 168).